The primary structure comprises 242 residues: MIKEINIKIKNFEGPLDLLLHLVSQYEMDIFEVPLVPVIEQYLIYIQTMKELELELAGEYMLMASQLMLIKSRRLLPTVTETFIEDTEQLEYDLLAQIDEYRKYKMLSEDLDELHQERSHYYSKSKTEIITDETVLLQDKTALDLFLAFSKILELQRQQIEDDNTMIAAEKFTIADKIFELNQKFTEQKICKFTDLFSDKTNKDELVTTFMALLELIKNQQVSFSQGELFGEIILERKEISE.

It belongs to the ScpA family. As to quaternary structure, component of a cohesin-like complex composed of ScpA, ScpB and the Smc homodimer, in which ScpA and ScpB bind to the head domain of Smc. The presence of the three proteins is required for the association of the complex with DNA.

It localises to the cytoplasm. Participates in chromosomal partition during cell division. May act via the formation of a condensin-like complex containing Smc and ScpB that pull DNA away from mid-cell into both cell halves. This chain is Segregation and condensation protein A, found in Lactococcus lactis subsp. cremoris (strain MG1363).